The chain runs to 457 residues: Serine/threonine-protein phosphatase 2A activator 2 (457 aa).

Disordered stretches follow at residues 387 to 407 (DAHG…GEGQ) and 426 to 457 (AEQE…IPFD). Over residues 391-400 (HIHPAGKPHA) the composition is skewed to basic residues.

The protein belongs to the PTPA-type PPIase family.

The protein resides in the cytoplasm. It carries out the reaction [protein]-peptidylproline (omega=180) = [protein]-peptidylproline (omega=0). Functionally, PPIases accelerate the folding of proteins. It catalyzes the cis-trans isomerization of proline imidic peptide bonds in oligopeptides. Acts as a regulatory subunit for PP2A-like phosphatases modulating their activity or substrate specificity, probably by inducing a conformational change in the catalytic subunit, a direct target of the PPIase. Can reactivate inactive phosphatase PP2A-phosphatase methylesterase complexes (PP2Ai) in presence of ATP and Mg(2+) by dissociating the inactive form from the complex. The polypeptide is Serine/threonine-protein phosphatase 2A activator 2 (RRD2) (Mycosarcoma maydis (Corn smut fungus)).